The sequence spans 1128 residues: Major DNA-binding protein (1128 aa).

A required for nuclear localization region spans residues 1104 to 1128; the sequence is LGGGGQGSGGRRKRRLATVLPGLEV.

The protein belongs to the herpesviridae major DNA-binding protein family. Homooligomers. Forms double-helical filaments necessary for the formation of replication compartments within the host nucleus. Interacts with the origin-binding protein. Interacts with the helicase primase complex; this interaction stimulates primer synthesis activity of the helicase-primase complex. Interacts with the DNA polymerase. Interacts with the alkaline exonuclease; this interaction increases its nuclease processivity.

Its subcellular location is the virion tegument. It is found in the host nucleus. Plays several crucial roles in viral infection. Participates in the opening of the viral DNA origin to initiate replication by interacting with the origin-binding protein. May disrupt loops, hairpins and other secondary structures present on ssDNA to reduce and eliminate pausing of viral DNA polymerase at specific sites during elongation. Promotes viral DNA recombination by performing strand-transfer, characterized by the ability to transfer a DNA strand from a linear duplex to a complementary single-stranded DNA circle. Can also catalyze the renaturation of complementary single strands. Additionally, reorganizes the host cell nucleus, leading to the formation of prereplicative sites and replication compartments. This process is driven by the protein which can form double-helical filaments in the absence of DNA. This Homo sapiens (Human) protein is Major DNA-binding protein.